Consider the following 341-residue polypeptide: Methionine import ATP-binding protein MetN 2 (341 aa).

The 240-residue stretch at 2 to 241 (IELKEVVKEY…PQHAVTKRFV (240 aa)) folds into the ABC transporter domain. 38-45 (GFSGAGKS) provides a ligand contact to ATP.

It belongs to the ABC transporter superfamily. Methionine importer (TC 3.A.1.24) family. The complex is composed of two ATP-binding proteins (MetN), two transmembrane proteins (MetI) and a solute-binding protein (MetQ).

The protein resides in the cell membrane. It carries out the reaction L-methionine(out) + ATP + H2O = L-methionine(in) + ADP + phosphate + H(+). It catalyses the reaction D-methionine(out) + ATP + H2O = D-methionine(in) + ADP + phosphate + H(+). Part of the ABC transporter complex MetNIQ involved in methionine import. Responsible for energy coupling to the transport system. The sequence is that of Methionine import ATP-binding protein MetN 2 from Staphylococcus aureus (strain MRSA252).